The sequence spans 431 residues: Tyrosine--tRNA ligase (431 aa).

L-tyrosine is bound at residue Y34. Residues 39–48 (PTADSLHIGH) carry the 'HIGH' region motif. 2 residues coordinate L-tyrosine: Y171 and Q175. The short motif at 231-235 (KFGKT) is the 'KMSKS' region element. ATP is bound at residue K234. The S4 RNA-binding domain occupies 353-422 (INVVEALVKT…GKYTILRRGK (70 aa)).

It belongs to the class-I aminoacyl-tRNA synthetase family. TyrS type 1 subfamily. As to quaternary structure, homodimer.

Its subcellular location is the cytoplasm. The enzyme catalyses tRNA(Tyr) + L-tyrosine + ATP = L-tyrosyl-tRNA(Tyr) + AMP + diphosphate + H(+). Catalyzes the attachment of tyrosine to tRNA(Tyr) in a two-step reaction: tyrosine is first activated by ATP to form Tyr-AMP and then transferred to the acceptor end of tRNA(Tyr). In Neisseria meningitidis serogroup A / serotype 4A (strain DSM 15465 / Z2491), this protein is Tyrosine--tRNA ligase.